Consider the following 168-residue polypeptide: Ribosome-binding factor A (168 aa).

A compositionally biased stretch (basic and acidic residues) spans V122–R136. The segment at V122 to G168 is disordered. Positions E144–E159 are enriched in acidic residues.

Belongs to the RbfA family. As to quaternary structure, monomer. Binds 30S ribosomal subunits, but not 50S ribosomal subunits or 70S ribosomes.

It is found in the cytoplasm. Functionally, one of several proteins that assist in the late maturation steps of the functional core of the 30S ribosomal subunit. Associates with free 30S ribosomal subunits (but not with 30S subunits that are part of 70S ribosomes or polysomes). Required for efficient processing of 16S rRNA. May interact with the 5'-terminal helix region of 16S rRNA. This is Ribosome-binding factor A from Frankia casuarinae (strain DSM 45818 / CECT 9043 / HFP020203 / CcI3).